The primary structure comprises 452 residues: Friend leukemia integration 1 transcription factor (452 aa).

The residue at position 39 (S39) is a Phosphoserine. The PNT domain maps to 112–198 (PPPPNMTTNE…SHLTYLRESS (87 aa)). A compositionally biased stretch (polar residues) spans 202 to 214 (YNTTSHTDPSSRL). Residues 202–272 (YNTTSHTDPS…YQILGPTSSR (71 aa)) are disordered. A compositionally biased stretch (basic and acidic residues) spans 215-226 (NVKEDPSYDSVR). A compositionally biased stretch (polar residues) spans 248–257 (QTMSKNTEQR). The segment at residues 281-361 (IQLWQFLLEL…HGKRYAYKFD (81 aa)) is a DNA-binding region (ETS).

It belongs to the ETS family. In terms of assembly, can form homodimers or heterodimers with ETV6/TEL1.

The protein resides in the nucleus. In terms of biological role, sequence-specific transcriptional activator. Recognizes the DNA sequence 5'-C[CA]GGAAGT-3'. The chain is Friend leukemia integration 1 transcription factor (FLI1) from Bos taurus (Bovine).